We begin with the raw amino-acid sequence, 181 residues long: Putative manganese efflux pump MntP (181 aa).

6 helical membrane passes run 3–23 (LIFL…ANGA), 42–62 (IFQA…VGFI), 63–83 (SYID…KMIK), 101–121 (LMLG…TFSF), 124–144 (INIA…CVIA), and 160–180 (LVLG…THLI).

Belongs to the MntP (TC 9.B.29) family.

The protein resides in the cell inner membrane. Its function is as follows. Probably functions as a manganese efflux pump. The polypeptide is Putative manganese efflux pump MntP (Campylobacter fetus subsp. fetus (strain 82-40)).